Consider the following 49-residue polypeptide: uncharacterized protein (49 aa).

Residues 31 to 48 (PDLYTIIVSYFSIFSLFF) form a helical membrane-spanning segment.

The protein resides in the membrane. This is an uncharacterized protein from Saccharomyces cerevisiae (strain ATCC 204508 / S288c) (Baker's yeast).